Here is a 424-residue protein sequence, read N- to C-terminus: CinA-like protein (424 aa).

It belongs to the CinA family.

In Shewanella amazonensis (strain ATCC BAA-1098 / SB2B), this protein is CinA-like protein.